Here is a 701-residue protein sequence, read N- to C-terminus: Elongation factor G (701 aa).

Residues Thr8–Lys290 enclose the tr-type G domain. GTP-binding positions include Ala17–Thr24, Asp88–His92, and Asn142–Asp145.

It belongs to the TRAFAC class translation factor GTPase superfamily. Classic translation factor GTPase family. EF-G/EF-2 subfamily.

The protein localises to the cytoplasm. Its function is as follows. Catalyzes the GTP-dependent ribosomal translocation step during translation elongation. During this step, the ribosome changes from the pre-translocational (PRE) to the post-translocational (POST) state as the newly formed A-site-bound peptidyl-tRNA and P-site-bound deacylated tRNA move to the P and E sites, respectively. Catalyzes the coordinated movement of the two tRNA molecules, the mRNA and conformational changes in the ribosome. This Buchnera aphidicola subsp. Cinara cedri (strain Cc) protein is Elongation factor G.